Consider the following 1449-residue polypeptide: DNA polymerase III PolC-type (1449 aa).

Residues 194–231 (AQEKPVKKESSDNKHKSNGGNKGGYEKKSYKDEPKNEN) form a disordered region. Composition is skewed to basic and acidic residues over residues 197 to 208 (KPVKKESSDNKH) and 217 to 229 (GYEK…EPKN). The Exonuclease domain occupies 435–590 (YVVFDIETTG…DDAKATAEIL (156 aa)).

It belongs to the DNA polymerase type-C family. PolC subfamily.

Its subcellular location is the cytoplasm. It catalyses the reaction DNA(n) + a 2'-deoxyribonucleoside 5'-triphosphate = DNA(n+1) + diphosphate. Functionally, required for replicative DNA synthesis. This DNA polymerase also exhibits 3' to 5' exonuclease activity. The sequence is that of DNA polymerase III PolC-type from Clostridium perfringens (strain 13 / Type A).